Consider the following 31-residue polypeptide: Cyclotide mden-L (31 aa).

The cyclopeptide (Gly-Asn) cross-link spans 1–31 (GSIPCGESCVYIPCISAVLGCSCKNKVCYRN). 3 disulfide bridges follow: Cys-5/Cys-21, Cys-9/Cys-23, and Cys-14/Cys-28.

The protein belongs to the cyclotide family. Bracelet subfamily. This is a cyclic peptide.

Functionally, probably participates in a plant defense mechanism. In Melicytus dentatus (Tree violet), this protein is Cyclotide mden-L.